Reading from the N-terminus, the 366-residue chain is Spermidine/putrescine import ATP-binding protein PotA (366 aa).

The ABC transporter domain maps to 14-247 (ISARALRKVY…PADRFVADFI (234 aa)). 49-56 (GPSGCGKT) serves as a coordination point for ATP.

This sequence belongs to the ABC transporter superfamily. Spermidine/putrescine importer (TC 3.A.1.11.1) family. The complex is composed of two ATP-binding proteins (PotA), two transmembrane proteins (PotB and PotC) and a solute-binding protein (PotD).

The protein localises to the cell inner membrane. The enzyme catalyses ATP + H2O + polyamine-[polyamine-binding protein]Side 1 = ADP + phosphate + polyamineSide 2 + [polyamine-binding protein]Side 1.. Part of the ABC transporter complex PotABCD involved in spermidine/putrescine import. Responsible for energy coupling to the transport system. In Ruegeria pomeroyi (strain ATCC 700808 / DSM 15171 / DSS-3) (Silicibacter pomeroyi), this protein is Spermidine/putrescine import ATP-binding protein PotA.